The following is a 735-amino-acid chain: 1,4-alpha-glucan branching enzyme GlgB (735 aa).

The Nucleophile role is filled by Asp-418. Glu-471 serves as the catalytic Proton donor.

This sequence belongs to the glycosyl hydrolase 13 family. GlgB subfamily. In terms of assembly, monomer.

It catalyses the reaction Transfers a segment of a (1-&gt;4)-alpha-D-glucan chain to a primary hydroxy group in a similar glucan chain.. Its pathway is glycan biosynthesis; glycogen biosynthesis. Catalyzes the formation of the alpha-1,6-glucosidic linkages in glycogen by scission of a 1,4-alpha-linked oligosaccharide from growing alpha-1,4-glucan chains and the subsequent attachment of the oligosaccharide to the alpha-1,6 position. The protein is 1,4-alpha-glucan branching enzyme GlgB of Agrobacterium fabrum (strain C58 / ATCC 33970) (Agrobacterium tumefaciens (strain C58)).